The primary structure comprises 588 residues: Transmembrane protein 201 homolog (588 aa).

Residues 1–212 (MEVAAAVGVI…FFFAGGSTCE (212 aa)) are Nuclear-facing. The helical transmembrane segment at 213-233 (ALHFGCLISSIILFLANIDFL) threads the bilayer. Residues 234 to 254 (QQDAGASLINLPKALQDILPE) lie on the Perinuclear space side of the membrane. The helical transmembrane segment at 255–275 (VYKYSFVINFLIFTTHLIAAF) threads the bilayer. Residues 276 to 280 (NNKCR) are Nuclear-facing. A helical membrane pass occupies residues 281–301 (VTLPDLLLPILLILAMLTVLT). At 302–309 (SSDNLSQD) the chain is on the perinuclear space side. The helical transmembrane segment at 310 to 330 (VALVRGACASFSTILSMAVTL) threads the bilayer. Residues 331-564 (LPRKKLHKKR…SGAWQCRVIG (234 aa)) are Nuclear-facing. The interval 378-457 (RRSPHTPSAS…QSTRSSHFKP (80 aa)) is disordered. The span at 384-396 (PSASPPAMNSSPP) shows a compositional bias: low complexity. 2 stretches are compositionally biased toward polar residues: residues 418-430 (NMQS…NNHV) and 441-452 (MAAQSVAQSTRS). Residues 565-585 (ILFALVFIVLIMQIGLFYVLF) form a helical membrane-spanning segment. The Perinuclear space portion of the chain corresponds to 586–588 (TRN).

The protein belongs to the TMEM201 family.

The protein resides in the nucleus inner membrane. In terms of biological role, plays a role in nuclear migration in hypodermal cells. This is Transmembrane protein 201 homolog from Caenorhabditis elegans.